Consider the following 198-residue polypeptide: Nucleoid occlusion factor SlmA (198 aa).

Residues 10–70 (NRREEILQSL…SLIEFIEDSL (61 aa)) enclose the HTH tetR-type domain. A DNA-binding region (H-T-H motif) is located at residues 33–52 (TTAKLAASVGVSEAALYRHF). Residues 117-144 (EQDRLQGRINQLFERIEAQLRQVLREKR) are a coiled coil.

Belongs to the nucleoid occlusion factor SlmA family. As to quaternary structure, homodimer. Interacts with FtsZ.

The protein resides in the cytoplasm. It is found in the nucleoid. Its function is as follows. Required for nucleoid occlusion (NO) phenomenon, which prevents Z-ring formation and cell division over the nucleoid. Acts as a DNA-associated cell division inhibitor that binds simultaneously chromosomal DNA and FtsZ, and disrupts the assembly of FtsZ polymers. SlmA-DNA-binding sequences (SBS) are dispersed on non-Ter regions of the chromosome, preventing FtsZ polymerization at these regions. This is Nucleoid occlusion factor SlmA from Citrobacter koseri (strain ATCC BAA-895 / CDC 4225-83 / SGSC4696).